Reading from the N-terminus, the 139-residue chain is Trafficking protein particle complex subunit 2-like protein (139 aa).

It belongs to the TRAPP small subunits family. Sedlin subfamily. In terms of assembly, component of the multisubunit TRAPP (transport protein particle) complex, which includes at least TRAPPC2, TRAPPC2L, TRAPPC3, TRAPPC3L, TRAPPC4, TRAPPC5, TRAPPC8, TRAPPC9, TRAPPC10, TRAPPC11 and TRAPPC12. Interacts with the heterodimer TRAPPC3-TRAPPC6A.

The protein resides in the cytoplasm. It is found in the perinuclear region. It localises to the endoplasmic reticulum. Its subcellular location is the golgi apparatus. Its function is as follows. May play a role in vesicular transport from endoplasmic reticulum to Golgi. This chain is Trafficking protein particle complex subunit 2-like protein (Trappc2l), found in Rattus norvegicus (Rat).